Reading from the N-terminus, the 330-residue chain is Glycerol-3-phosphate dehydrogenase [NAD(P)+] (330 aa).

NADPH is bound by residues W11, R31, H32, and K105. Residues K105 and G133 each coordinate sn-glycerol 3-phosphate. A137 is a binding site for NADPH. Residues K188, D241, S251, R252, and N253 each contribute to the sn-glycerol 3-phosphate site. The active-site Proton acceptor is K188. Residue R252 participates in NADPH binding. Residues L277 and E279 each contribute to the NADPH site.

The protein belongs to the NAD-dependent glycerol-3-phosphate dehydrogenase family.

Its subcellular location is the cytoplasm. The catalysed reaction is sn-glycerol 3-phosphate + NAD(+) = dihydroxyacetone phosphate + NADH + H(+). It catalyses the reaction sn-glycerol 3-phosphate + NADP(+) = dihydroxyacetone phosphate + NADPH + H(+). It participates in membrane lipid metabolism; glycerophospholipid metabolism. In terms of biological role, catalyzes the reduction of the glycolytic intermediate dihydroxyacetone phosphate (DHAP) to sn-glycerol 3-phosphate (G3P), the key precursor for phospholipid synthesis. The polypeptide is Glycerol-3-phosphate dehydrogenase [NAD(P)+] (Orientia tsutsugamushi (strain Boryong) (Rickettsia tsutsugamushi)).